Here is a 385-residue protein sequence, read N- to C-terminus: Leucine aminopeptidase 1 (385 aa).

Positions 1 to 14 (MKFLTLALSATATA) are cleaved as a signal peptide. A propeptide spanning residues 15–85 (MIIVNPEQQP…YGTLHTTRVV (71 aa)) is cleaved from the precursor. Residues H185, D204, E243, and D270 each contribute to the Zn(2+) site. Residues C319 and C323 are joined by a disulfide bond. H352 provides a ligand contact to Zn(2+).

The protein belongs to the peptidase M28 family. M28E subfamily. As to quaternary structure, monomer. Zn(2+) serves as cofactor.

It is found in the secreted. Its function is as follows. Extracellular aminopeptidase that allows assimilation of proteinaceous substrates. This Penicillium rubens (strain ATCC 28089 / DSM 1075 / NRRL 1951 / Wisconsin 54-1255) (Penicillium chrysogenum) protein is Leucine aminopeptidase 1 (lap1).